A 336-amino-acid chain; its full sequence is MKFIDEATIIVAAGDGGNGCISFRREKYIPFGPAEGGDGGNGGNVWLQADENLNTLIDYHFQHNFHAENGKHGQGKNFTGKCGKDLTIKVPIGTRVVDQNTNEILGDLIVHQQYLLVAKGGLRGLGNNHFKSSANCTPRKKTNGTKGEIRRLQLELILLADVGLLGLPNVGKSTLIRAVSAAKPKVANYPFTTLVPNLGVVQVHKKQSFIIADIPGLIKGAADGAGLGIRFLKHLERCRILLHLIDLAPADQSSPVENASIIINELKRYSEKLATKPSWLVFNKLDLIDKREALNIAQTISDALNQKHNYYLISAMNHQGIKTLCRDIMLFINKNK.

Positions 1 to 159 (MKFIDEATII…RRLQLELILL (159 aa)) constitute an Obg domain. Residues 160–333 (ADVGLLGLPN…LCRDIMLFIN (174 aa)) form the OBG-type G domain. Residues 166–173 (GLPNVGKS), 191–195 (FTTLV), 213–216 (DIPG), 283–286 (NKLD), and 314–316 (SAM) each bind GTP. 2 residues coordinate Mg(2+): Ser-173 and Thr-193.

It belongs to the TRAFAC class OBG-HflX-like GTPase superfamily. OBG GTPase family. Monomer. Mg(2+) is required as a cofactor.

The protein resides in the cytoplasm. In terms of biological role, an essential GTPase which binds GTP, GDP and possibly (p)ppGpp with moderate affinity, with high nucleotide exchange rates and a fairly low GTP hydrolysis rate. Plays a role in control of the cell cycle, stress response, ribosome biogenesis and in those bacteria that undergo differentiation, in morphogenesis control. The chain is GTPase Obg from Baumannia cicadellinicola subsp. Homalodisca coagulata.